A 312-amino-acid polypeptide reads, in one-letter code: Serine/threonine-protein kinase ppk11 (312 aa).

In terms of domain architecture, Protein kinase spans tyrosine 6–isoleucine 258. Residues isoleucine 12–valine 20 and lysine 35 each bind ATP. The active-site Proton acceptor is the aspartate 127.

Belongs to the protein kinase superfamily. Ser/Thr protein kinase family.

Its subcellular location is the cytoplasm. The protein resides in the nucleus. It catalyses the reaction L-seryl-[protein] + ATP = O-phospho-L-seryl-[protein] + ADP + H(+). The enzyme catalyses L-threonyl-[protein] + ATP = O-phospho-L-threonyl-[protein] + ADP + H(+). This chain is Serine/threonine-protein kinase ppk11 (ppk11), found in Schizosaccharomyces pombe (strain 972 / ATCC 24843) (Fission yeast).